The chain runs to 269 residues: Formamidopyrimidine-DNA glycosylase (269 aa).

P2 (schiff-base intermediate with DNA) is an active-site residue. The active-site Proton donor is the E3. K57 acts as the Proton donor; for beta-elimination activity in catalysis. H90, R109, and K150 together coordinate DNA. The segment at 235 to 269 (QVYGRKGEPCRVCGTPIVATKHAQRATFYCRHCQK) adopts an FPG-type zinc-finger fold. Catalysis depends on R259, which acts as the Proton donor; for delta-elimination activity.

This sequence belongs to the FPG family. Monomer. It depends on Zn(2+) as a cofactor.

The enzyme catalyses Hydrolysis of DNA containing ring-opened 7-methylguanine residues, releasing 2,6-diamino-4-hydroxy-5-(N-methyl)formamidopyrimidine.. The catalysed reaction is 2'-deoxyribonucleotide-(2'-deoxyribose 5'-phosphate)-2'-deoxyribonucleotide-DNA = a 3'-end 2'-deoxyribonucleotide-(2,3-dehydro-2,3-deoxyribose 5'-phosphate)-DNA + a 5'-end 5'-phospho-2'-deoxyribonucleoside-DNA + H(+). Involved in base excision repair of DNA damaged by oxidation or by mutagenic agents. Acts as a DNA glycosylase that recognizes and removes damaged bases. Has a preference for oxidized purines, such as 7,8-dihydro-8-oxoguanine (8-oxoG). Has AP (apurinic/apyrimidinic) lyase activity and introduces nicks in the DNA strand. Cleaves the DNA backbone by beta-delta elimination to generate a single-strand break at the site of the removed base with both 3'- and 5'-phosphates. This is Formamidopyrimidine-DNA glycosylase from Salmonella dublin (strain CT_02021853).